The following is a 431-amino-acid chain: UPF0597 protein LCA_0156 (431 aa).

It belongs to the UPF0597 family.

This chain is UPF0597 protein LCA_0156, found in Latilactobacillus sakei subsp. sakei (strain 23K) (Lactobacillus sakei subsp. sakei).